The sequence spans 153 residues: Histone H2B.8 (153 aa).

2 stretches are compositionally biased toward basic and acidic residues: residues Met-1–Pro-28 and Glu-36–Lys-53. The tract at residues Met-1–Lys-61 is disordered. An N6-acetyllysine mark is found at Lys-7 and Lys-37. A Glycyl lysine isopeptide (Lys-Gly) (interchain with G-Cter in ubiquitin) cross-link involves residue Lys-149.

It belongs to the histone H2B family. As to quaternary structure, the nucleosome is a histone octamer containing two molecules each of H2A, H2B, H3 and H4 assembled in one H3-H4 heterotetramer and two H2A-H2B heterodimers. The octamer wraps approximately 147 bp of DNA. Can be acetylated to form H2BK6ac and H2BK33ac. In terms of processing, monoubiquitinated by BRE1 to form H2BK143ub1 and deubiquitinated by UBP26. Required for heterochromatic histone H3 di- and trimethylation at H3K4me. May give a specific tag for epigenetic transcriptional activation.

It localises to the nucleus. The protein resides in the chromosome. Core component of nucleosome. Nucleosomes wrap and compact DNA into chromatin, limiting DNA accessibility to the cellular machineries which require DNA as a template. Histones thereby play a central role in transcription regulation, DNA repair, DNA replication and chromosomal stability. DNA accessibility is regulated via a complex set of post-translational modifications of histones, also called histone code, and nucleosome remodeling. This chain is Histone H2B.8 (H2B.8), found in Oryza sativa subsp. indica (Rice).